The following is a 749-amino-acid chain: Disintegrin and metalloproteinase domain-containing protein 10 (749 aa).

Residues 1–19 (MVLPTVLILLLSWAAGLGG) form the signal peptide. Residues 20–214 (QYGNPLNKYI…SGPELLRKKR (195 aa)) constitute a propeptide that is removed on maturation. At 20-673 (QYGNPLNKYI…SPQLYENIAE (654 aa)) the chain is on the extracellular side. The short motif at 171–178 (GGCADHSV) is the Cysteine switch element. Cys-173 contributes to the Zn(2+) binding site. The Peptidase M12B domain maps to 221-457 (NTCQLYIQTD…KRNNCFVESG (237 aa)). Cystine bridges form between Cys-223–Cys-314, Cys-345–Cys-452, Cys-400–Cys-436, Cys-461–Cys-496, Cys-472–Cys-485, Cys-474–Cys-480, Cys-484–Cys-516, Cys-504–Cys-512, Cys-511–Cys-537, Cys-525–Cys-544, Cys-531–Cys-563, Cys-556–Cys-568, Cys-573–Cys-599, Cys-581–Cys-608, Cys-583–Cys-598, Cys-595–Cys-640, and Cys-633–Cys-646. Residues Asn-268 and Asn-279 are each glycosylated (N-linked (GlcNAc...) asparagine). His-384 contacts Zn(2+). The active site involves Glu-385. His-388 and His-394 together coordinate Zn(2+). N-linked (GlcNAc...) asparagine glycosylation is present at Asn-440. The region spanning 458-552 (QPICGNGMVE…LCPASDPKPN (95 aa)) is the Disintegrin domain. Asn-552 carries N-linked (GlcNAc...) asparagine glycosylation. Residues 674–694 (WIVAHWWAVLLMGIALIMLMA) form a helical membrane-spanning segment. Over 695 to 749 (GFIKICSVHTPSSNPKLPPPKPLPGTLKRRRPPQPIQQPPRQRPRESYQMGHMRR) the chain is Cytoplasmic. Positions 705 to 749 (PSSNPKLPPPKPLPGTLKRRRPPQPIQQPPRQRPRESYQMGHMRR) are disordered. Positions 709–716 (PKLPPPKP) match the SH3-binding motif. Position 720 is a phosphothreonine (Thr-720). The short motif at 723–729 (RRRPPQP) is the SH3-binding element. The interval 735-749 (RQRPRESYQMGHMRR) is interaction with AP2A1, AP2A2 and AP2M1.

In terms of assembly, forms a ternary EFNA5-EPHA3-ADAM10 complex mediating EFNA5 extracellular domain shedding by ADAM10 which regulates the EFNA5-EPHA3 complex internalization and function, the cleavage occurs in trans, with ADAM10 and its substrate being on the membranes of opposing cells. Interacts with the clathrin adapter AP2 complex subunits AP2A1, AP2A2, AP2B1, and AP2M1; this interaction facilitates ADAM10 endocytosis from the plasma membrane during long-term potentiation in hippocampal neurons. Forms a ternary complex composed of ADAM10, EPHA4 and CADH1; within the complex, ADAM10 cleaves CADH1 which disrupts adherens junctions. Interacts with EPHA2. Interacts with NGF in a divalent cation-dependent manner. Interacts with TSPAN14; the interaction promotes ADAM10 maturation and cell surface expression. Interacts with TSPAN5, TSPAN10, TSPAN14, TSPAN15, TSPAN17 and TSPAN33; these interactions regulate ADAM10 substrate specificity, endocytosis and turnover. Interacts (via extracellular domain) with TSPAN33 (via extracellular domain) and (via cytoplasmic domain) with AFDN; interaction with TSPAN33 allows the docking of ADAM10 to zonula adherens through a PDZ11-dependent interaction between TSPAN33 and PLEKHA7 while interaction with AFDN locks ADAM10 at zonula adherens. Interacts with DLG1; this interaction recruits ADAM10 to the cell membrane during long-term depression in hippocampal neurons. Interacts (via extracellular domain) with BACE1 (via extracellular domain). Interacts with FAM171A1. Requires Zn(2+) as cofactor. In terms of processing, the precursor is cleaved by furin and PCSK7. In terms of tissue distribution, expressed in the brain, specifically in neurons and astrocytes (at protein level). Expressed in inner and outer pillar cells of the organ of Corti (at protein level). Expressed in kidney and lung.

The protein localises to the cell membrane. It is found in the golgi apparatus membrane. It localises to the cytoplasmic vesicle. Its subcellular location is the clathrin-coated vesicle. The protein resides in the cell projection. The protein localises to the axon. It is found in the dendrite. It localises to the cell junction. Its subcellular location is the adherens junction. The protein resides in the cytoplasm. It catalyses the reaction Endopeptidase of broad specificity.. Its activity is regulated as follows. Catalytically inactive when the propeptide is intact and associated with the mature enzyme. The disintegrin and cysteine-rich regions modulate access of substrates to exerts an inhibitory effect on the cleavage of ADAM10 substrates. Its function is as follows. Transmembrane metalloprotease which mediates the ectodomain shedding of a myriad of transmembrane proteins, including adhesion proteins, growth factor precursors and cytokines being essential for development and tissue homeostasis. Associates with six members of the tetraspanin superfamily TspanC8 which regulate its exit from the endoplasmic reticulum and its substrate selectivity. Cleaves the membrane-bound precursor of TNF-alpha to its mature soluble form. Responsible for the proteolytical release of soluble JAM3 from endothelial cells surface. Responsible for the proteolytic release of several other cell-surface proteins, including heparin-binding epidermal growth-like factor, ephrin-A2, CD44, CDH2 and for constitutive and regulated alpha-secretase cleavage of amyloid precursor protein (APP) at '687-Lys-|-Leu-688'. Contributes to the normal cleavage of the cellular prion protein. Involved in the cleavage of the adhesion molecule L1 at the cell surface and in released membrane vesicles, suggesting a vesicle-based protease activity. Also controls the proteolytic processing of Notch and mediates lateral inhibition during neurogenesis. Required for the development of type 1 transitional B cells into marginal zone B cells, probably by cleaving Notch. Responsible for the FasL ectodomain shedding and for the generation of the remnant ADAM10-processed FasL (FasL APL) transmembrane form. Also cleaves the ectodomain of the integral membrane proteins CORIN and ITM2B. Mediates the proteolytic cleavage of LAG3, leading to release the secreted form of LAG3. Mediates the proteolytic cleavage of IL6R and IL11RA, leading to the release of secreted forms of IL6R and IL11RA. Enhances the cleavage of CHL1 by BACE1. Cleaves NRCAM. Cleaves TREM2, resulting in shedding of the TREM2 ectodomain. Involved in the development and maturation of glomerular and coronary vasculature. During development of the cochlear organ of Corti, promotes pillar cell separation by forming a ternary complex with CADH1 and EPHA4 and cleaving CADH1 at adherens junctions. May regulate the EFNA5-EPHA3 signaling. In Mus musculus (Mouse), this protein is Disintegrin and metalloproteinase domain-containing protein 10 (Adam10).